Consider the following 237-residue polypeptide: Ribonuclease PH (237 aa).

Residues arginine 86 and 124 to 126 (GTR) each bind phosphate.

Belongs to the RNase PH family. As to quaternary structure, homohexameric ring arranged as a trimer of dimers.

It catalyses the reaction tRNA(n+1) + phosphate = tRNA(n) + a ribonucleoside 5'-diphosphate. In terms of biological role, phosphorolytic 3'-5' exoribonuclease that plays an important role in tRNA 3'-end maturation. Removes nucleotide residues following the 3'-CCA terminus of tRNAs; can also add nucleotides to the ends of RNA molecules by using nucleoside diphosphates as substrates, but this may not be physiologically important. Probably plays a role in initiation of 16S rRNA degradation (leading to ribosome degradation) during starvation. This chain is Ribonuclease PH, found in Alteromonas mediterranea (strain DSM 17117 / CIP 110805 / LMG 28347 / Deep ecotype).